The primary structure comprises 492 residues: Protein nucleotidyltransferase YdiU (492 aa).

ATP-binding residues include Gly-91, Gly-93, Arg-94, Lys-114, Asp-126, Gly-127, Arg-180, and Arg-187. The active-site Proton acceptor is Asp-256. Residues Asn-257 and Asp-266 each contribute to the Mg(2+) site. ATP is bound at residue Asp-266.

It belongs to the SELO family. The cofactor is Mg(2+). Requires Mn(2+) as cofactor.

It catalyses the reaction L-seryl-[protein] + ATP = 3-O-(5'-adenylyl)-L-seryl-[protein] + diphosphate. It carries out the reaction L-threonyl-[protein] + ATP = 3-O-(5'-adenylyl)-L-threonyl-[protein] + diphosphate. The catalysed reaction is L-tyrosyl-[protein] + ATP = O-(5'-adenylyl)-L-tyrosyl-[protein] + diphosphate. The enzyme catalyses L-histidyl-[protein] + UTP = N(tele)-(5'-uridylyl)-L-histidyl-[protein] + diphosphate. It catalyses the reaction L-seryl-[protein] + UTP = O-(5'-uridylyl)-L-seryl-[protein] + diphosphate. It carries out the reaction L-tyrosyl-[protein] + UTP = O-(5'-uridylyl)-L-tyrosyl-[protein] + diphosphate. Functionally, nucleotidyltransferase involved in the post-translational modification of proteins. It can catalyze the addition of adenosine monophosphate (AMP) or uridine monophosphate (UMP) to a protein, resulting in modifications known as AMPylation and UMPylation. The protein is Protein nucleotidyltransferase YdiU of Synechococcus sp. (strain ATCC 27144 / PCC 6301 / SAUG 1402/1) (Anacystis nidulans).